The primary structure comprises 443 residues: Methylenetetrahydrofolate--tRNA-(uracil-5-)-methyltransferase TrmFO (443 aa).

8-13 lines the FAD pocket; it reads GAGLAG.

Belongs to the MnmG family. TrmFO subfamily. FAD serves as cofactor.

The protein resides in the cytoplasm. It catalyses the reaction uridine(54) in tRNA + (6R)-5,10-methylene-5,6,7,8-tetrahydrofolate + NADH + H(+) = 5-methyluridine(54) in tRNA + (6S)-5,6,7,8-tetrahydrofolate + NAD(+). The catalysed reaction is uridine(54) in tRNA + (6R)-5,10-methylene-5,6,7,8-tetrahydrofolate + NADPH + H(+) = 5-methyluridine(54) in tRNA + (6S)-5,6,7,8-tetrahydrofolate + NADP(+). In terms of biological role, catalyzes the folate-dependent formation of 5-methyl-uridine at position 54 (M-5-U54) in all tRNAs. The polypeptide is Methylenetetrahydrofolate--tRNA-(uracil-5-)-methyltransferase TrmFO (Thermus thermophilus (strain ATCC 27634 / DSM 579 / HB8)).